The following is a 315-amino-acid chain: Gamma-hemolysin component C (315 aa).

Residues 1 to 29 (MLKNKILATTLSVSLLAPLANPLLENAKA) form the signal peptide.

This sequence belongs to the aerolysin family. As to quaternary structure, toxicity requires sequential binding and synergistic association of a class S and a class F component which form heterooligomeric complexes. HlgC (class S) associates with HlgB (class F) thus forming an CB toxin.

Toxin that seems to act by forming pores in the membrane of the cell. Has a hemolytic and a leucotoxic activity. The chain is Gamma-hemolysin component C (hlgC) from Staphylococcus aureus (strain MRSA252).